The chain runs to 500 residues: Protein psiE (500 aa).

An N-terminal signal peptide occupies residues Met-1 to Ser-18. N-linked (GlcNAc...) asparagine glycosylation occurs at Asn-59. Residues Thr-114–Asp-256 form the PA14 domain. N-linked (GlcNAc...) asparagine glycosylation is found at Asn-314, Asn-341, Asn-366, Asn-420, and Asn-469.

It belongs to the prespore-cell-inducing factor family.

Its subcellular location is the secreted. The polypeptide is Protein psiE (psiE) (Dictyostelium discoideum (Social amoeba)).